A 238-amino-acid polypeptide reads, in one-letter code: 1-(5-phosphoribosyl)-5-[(5-phosphoribosylamino)methylideneamino] imidazole-4-carboxamide isomerase (238 aa).

Aspartate 8 (proton acceptor) is an active-site residue. Aspartate 130 serves as the catalytic Proton donor.

This sequence belongs to the HisA/HisF family.

The protein localises to the cytoplasm. The catalysed reaction is 1-(5-phospho-beta-D-ribosyl)-5-[(5-phospho-beta-D-ribosylamino)methylideneamino]imidazole-4-carboxamide = 5-[(5-phospho-1-deoxy-D-ribulos-1-ylimino)methylamino]-1-(5-phospho-beta-D-ribosyl)imidazole-4-carboxamide. The protein operates within amino-acid biosynthesis; L-histidine biosynthesis; L-histidine from 5-phospho-alpha-D-ribose 1-diphosphate: step 4/9. This Methanococcus vannielii (strain ATCC 35089 / DSM 1224 / JCM 13029 / OCM 148 / SB) protein is 1-(5-phosphoribosyl)-5-[(5-phosphoribosylamino)methylideneamino] imidazole-4-carboxamide isomerase.